A 200-amino-acid chain; its full sequence is 5'(3')-deoxyribonucleotidase, cytosolic type (200 aa).

The active-site Nucleophile is the D12. 2 residues coordinate Mg(2+): D12 and D14. Residue D14 is the Proton donor of the active site. Positions 20, 46, 67, and 101 each coordinate substrate. The residue at position 102 (T102) is a Phosphothreonine. Residue K136 participates in substrate binding. Residue D147 participates in Mg(2+) binding. S184 carries the post-translational modification Phosphoserine.

It belongs to the 5'(3')-deoxyribonucleotidase family. As to quaternary structure, homodimer. The cofactor is Mg(2+).

It is found in the cytoplasm. Dephosphorylates the 5' and 2'(3')-phosphates of deoxyribonucleotides, with a preference for dUMP and dTMP, intermediate activity towards dGMP, and low activity towards dCMP and dAMP. The chain is 5'(3')-deoxyribonucleotidase, cytosolic type (Nt5c) from Mus musculus (Mouse).